A 189-amino-acid chain; its full sequence is Peptidyl-tRNA hydrolase (189 aa).

Position 15 (Y15) interacts with tRNA. The active-site Proton acceptor is H20. The tRNA site is built by F66, N68, and N114.

It belongs to the PTH family. As to quaternary structure, monomer.

It is found in the cytoplasm. The catalysed reaction is an N-acyl-L-alpha-aminoacyl-tRNA + H2O = an N-acyl-L-amino acid + a tRNA + H(+). Functionally, hydrolyzes ribosome-free peptidyl-tRNAs (with 1 or more amino acids incorporated), which drop off the ribosome during protein synthesis, or as a result of ribosome stalling. Catalyzes the release of premature peptidyl moieties from peptidyl-tRNA molecules trapped in stalled 50S ribosomal subunits, and thus maintains levels of free tRNAs and 50S ribosomes. This is Peptidyl-tRNA hydrolase from Streptococcus pneumoniae (strain Taiwan19F-14).